The chain runs to 865 residues: Valine--tRNA ligase (865 aa).

Residues Pro43–His53 carry the 'HIGH' region motif. The 'KMSKS' region motif lies at Lys523–Ser527. Position 526 (Lys526) interacts with ATP. Positions Gly797–Glu865 form a coiled coil.

The protein belongs to the class-I aminoacyl-tRNA synthetase family. ValS type 1 subfamily. Monomer.

It localises to the cytoplasm. The catalysed reaction is tRNA(Val) + L-valine + ATP = L-valyl-tRNA(Val) + AMP + diphosphate. Functionally, catalyzes the attachment of valine to tRNA(Val). As ValRS can inadvertently accommodate and process structurally similar amino acids such as threonine, to avoid such errors, it has a 'posttransfer' editing activity that hydrolyzes mischarged Thr-tRNA(Val) in a tRNA-dependent manner. In Thermotoga maritima (strain ATCC 43589 / DSM 3109 / JCM 10099 / NBRC 100826 / MSB8), this protein is Valine--tRNA ligase.